The sequence spans 445 residues: Rab GDP dissociation inhibitor beta (445 aa).

At Met1 the chain carries N-acetylmethionine. Lys112 carries the N6-acetyllysine modification. Ser130 bears the Phosphoserine mark. The residue at position 269 (Lys269) is an N6-acetyllysine. At Ser382 the chain carries Phosphoserine.

It belongs to the Rab GDI family. In terms of assembly, interacts with RHOH. Interacts with the GDP-bound inactive forms of RAB3A, RAB3B, RAB3C, RAB5A, RAB5B, RAB5C, RAB8A, RAB8B, RAB10, RAB12, RAB35, and RAB43; binds RAB3D to a lesser extent. Interacts with DZIP1; this interaction negatively regulates the interaction of GDI2 with GDP-bound RAB8A.

It is found in the cytoplasm. Its subcellular location is the membrane. The protein localises to the golgi apparatus. It localises to the trans-Golgi network. GDP-dissociation inhibitor preventing the GDP to GTP exchange of most Rab proteins. By keeping these small GTPases in their inactive GDP-bound form regulates intracellular membrane trafficking. Negatively regulates protein transport to the cilium and ciliogenesis through the inhibition of RAB8A. The protein is Rab GDP dissociation inhibitor beta (GDI2) of Sus scrofa (Pig).